The chain runs to 469 residues: Protein C-ets-2 (469 aa).

Residues 85-170 enclose the PNT domain; it reads ATFSGFKKEQ…EHLEQMIKEN (86 aa). Phosphoserine is present on residues Ser-220 and Ser-225. A disordered region spans residues 264–289; the sequence is NLLTNNSGTPKDHDSPENGADSFESS. 3 positions are modified to phosphoserine: Ser-295, Ser-298, and Ser-301. Positions 363-443 form a DNA-binding region, ETS; that stretch reads IQLWQFLLEL…SGKRYVYRFV (81 aa).

This sequence belongs to the ETS family. Post-translationally, phosphorylation by CDK10 at Ser-220 and Ser-225 creates a phosphodegron that targets ETS2 for proteasomal degradation.

It localises to the nucleus. Transcription factor activating transcription. Binds specifically the DNA GGAA/T core motif (Ets-binding site or EBS) in gene promoters and stimulates transcription. The protein is Protein C-ets-2 (ETS2) of Homo sapiens (Human).